The primary structure comprises 917 residues: MKKRLVTLLAGLLTVLSMGFGLAQFSDVPAGHWAKEAVEALAAKGIILGFPDGTFRGNENLTRYQAALLIYRLLQQIEEELKTQGTSPTMEALAPEDLEAMIAELKAQPMPEPGMDQAALKDLMDRVEAASIAADTALAQAQQLAERLDALAQDVEGVKGDLAGLRSQVEANADAIQALNELAVLLNQDVLSLQDRVTALEKMVSGGQELPDLEQFATKEDVAAVQEFAAALRSDLVGLSEKVSKLEGTVGDLSGKVATLQRNAFTISGSLSLNYSVYRAWGPDASAAGPGTANTFDIDRLFSSKFSTGDGNGNGSVGDEADLGKNTEGVTNATLSVSFSTGKLDAASDPGKLNSYPGLVQFSLRAKLTNPGKYDPSTGAPTYPINLTLDEFSSTLAVAKDQTLSFSFGRSVRSKFTEYVFDNDYNSRGHGFVATYKPGLLGATLTGVYGSKGANNGDFTYFRGARLALSPVEGIALGGSFVQEGLDANQGTTSASFPAPTTVYGVDASVKLGPVGLAGEYFNSDAAPNANGYYVKADVALGSISVAGNYRNIGAGVTGANMLSGDATSTLDQGGWGGVDSSGNVINGAPFRSNRQGFGVSASAGLGPITVKGYYDSSTVLANETITNSYGAFNYSANNQLVAYGGQADLAFGGFTLSGFYRIAQLNGSTTRYILTEKPAEAVYASEYGAKLAHDGASKDALVPKLNFTAAYTQKYDNATSGFTTQDIAVYGSYELALGPLTLKPMGRYHTQDAAAASTSSDYTTVKYGVAASIALDLPFKPSLSGEYYARSTQVTSANSGSSATGTISESKYAVGLKLGEFLFKNSSVEAKYASYTGSGLNAPILLGVADAASSTTSDYLYNNAVSSVGSNRGSVTGWYFTWTYWDLTFAYVEADVNNNGNQTHGQAFKISYTVKF.

The N-terminal stretch at 1-23 (MKKRLVTLLAGLLTVLSMGFGLA) is a signal peptide. The SLH domain maps to 24 to 84 (QFSDVPAGHW…QQIEEELKTQ (61 aa)).

Homotrimer.

Its subcellular location is the cell outer membrane. Functionally, plays an important role in the structural organization and integrity of the cell envelope, bridging the outer membrane to the peptidoglyan layer. Appears to be a nonselective channel. The sequence is that of Outer membrane protein SlpA (slpA) from Thermus thermophilus (strain ATCC 27634 / DSM 579 / HB8).